We begin with the raw amino-acid sequence, 495 residues long: Cytochrome P450 monooxygenase 88 (495 aa).

A helical membrane pass occupies residues 2 to 22 (FLQIVTSVLATGLLYALISVL). N-linked (GlcNAc...) asparagine glycosylation is found at asparagine 25 and asparagine 198. Cysteine 428 is a binding site for heme.

This sequence belongs to the cytochrome P450 family. Heme serves as cofactor.

It localises to the membrane. Its pathway is secondary metabolite biosynthesis. In terms of biological role, cytochrome P450 monooxygenase that is able to use 4-ethoxybenzoic acid as a substrate for oxidation. The polypeptide is Cytochrome P450 monooxygenase 88 (Postia placenta (strain ATCC 44394 / Madison 698-R) (Brown rot fungus)).